The primary structure comprises 623 residues: UvrABC system protein C (623 aa).

The region spanning alanine 21–valine 100 is the GIY-YIG domain. Residues aspartate 210 to leucine 245 enclose the UVR domain.

The protein belongs to the UvrC family. Interacts with UvrB in an incision complex.

The protein resides in the cytoplasm. The UvrABC repair system catalyzes the recognition and processing of DNA lesions. UvrC both incises the 5' and 3' sides of the lesion. The N-terminal half is responsible for the 3' incision and the C-terminal half is responsible for the 5' incision. This is UvrABC system protein C from Synechococcus sp. (strain JA-2-3B'a(2-13)) (Cyanobacteria bacterium Yellowstone B-Prime).